We begin with the raw amino-acid sequence, 464 residues long: Glutamate--tRNA ligase 1 (464 aa).

A 'HIGH' region motif is present at residues Pro8–Gly18. The 'KMSKS' region signature appears at Pro231–Arg235. Position 234 (Lys234) interacts with ATP.

It belongs to the class-I aminoacyl-tRNA synthetase family. Glutamate--tRNA ligase type 1 subfamily. Monomer.

It is found in the cytoplasm. It catalyses the reaction tRNA(Glu) + L-glutamate + ATP = L-glutamyl-tRNA(Glu) + AMP + diphosphate. In terms of biological role, catalyzes the attachment of glutamate to tRNA(Glu) in a two-step reaction: glutamate is first activated by ATP to form Glu-AMP and then transferred to the acceptor end of tRNA(Glu). The protein is Glutamate--tRNA ligase 1 of Thermotoga petrophila (strain ATCC BAA-488 / DSM 13995 / JCM 10881 / RKU-1).